The following is a 396-amino-acid chain: Lysophospholipid transporter LplT (396 aa).

Over 1–17 (MSESVHTNTSLWSKGMK) the chain is Periplasmic. The helical transmembrane segment at 18 to 38 (AVIVAQFLSAFGDNALLFATL) threads the bilayer. The Cytoplasmic segment spans residues 39-52 (ALLKAQFYPEWSQP). Residues 53-73 (ILQMVFVGAYILLAPFVGQVA) traverse the membrane as a helical segment. Topologically, residues 74-90 (DSFAKGRVMMFANGLKL) are periplasmic. The chain crosses the membrane as a helical span at residues 91-111 (LGAASICFGINPFLGYTLVGV). The Cytoplasmic segment spans residues 112–144 (GAAAYSPAKYGILGELTTGSKLVKANGLMEASA). The helical transmembrane segment at 145 to 165 (IAAILLGSVAGGVLADWHVLV) threads the bilayer. A166 is a topological domain (periplasmic). A helical membrane pass occupies residues 167–187 (LAACALAYGGAVVANIYIPKL). Residues 188–225 (AARPGQSWNLINMTRSFLNACTSLWCNGETRFSLVGTS) lie on the Cytoplasmic side of the membrane. A helical membrane pass occupies residues 226 to 246 (LFWGAGVTLRFLLVLWVPVAL). Over 247 to 255 (GITDNATPT) the chain is Periplasmic. Residues 256-276 (YLNAMVAIGIVVGAGAAAKLV) form a helical membrane-spanning segment. Topologically, residues 277 to 279 (TLE) are cytoplasmic. The helical transmembrane segment at 280–300 (TVSRCMPAGILIGVVVPIFSL) threads the bilayer. Residues 301–303 (QHE) are Periplasmic-facing. A helical membrane pass occupies residues 304–324 (LLPAYALLMLIGVLGGFFVVP). At 325–342 (LNALLQERGKKSVGAGNA) the chain is on the cytoplasmic side. A helical membrane pass occupies residues 343–363 (IAVQNLGENSAMLLMLGIYSL). The Periplasmic portion of the chain corresponds to 364–365 (AV). The helical transmembrane segment at 366–386 (MVGIPVVPIGIGFGALFALAI) threads the bilayer. The Cytoplasmic portion of the chain corresponds to 387 to 396 (TALWIWQRRH).

It belongs to the major facilitator superfamily. LplT (TC 2.A.1.42) family.

Its subcellular location is the cell inner membrane. Catalyzes the facilitated diffusion of 2-acyl-glycero-3-phosphoethanolamine (2-acyl-GPE) into the cell. The protein is Lysophospholipid transporter LplT of Shigella flexneri.